We begin with the raw amino-acid sequence, 420 residues long: Serine--tRNA ligase (420 aa).

225–227 (TLE) lines the L-serine pocket. 256–258 (RQE) contacts ATP. Glu279 contributes to the L-serine binding site. 343–346 (EVSS) serves as a coordination point for ATP. An L-serine-binding site is contributed by Thr379.

This sequence belongs to the class-II aminoacyl-tRNA synthetase family. Type-1 seryl-tRNA synthetase subfamily. Homodimer. The tRNA molecule binds across the dimer.

Its subcellular location is the cytoplasm. It carries out the reaction tRNA(Ser) + L-serine + ATP = L-seryl-tRNA(Ser) + AMP + diphosphate + H(+). The enzyme catalyses tRNA(Sec) + L-serine + ATP = L-seryl-tRNA(Sec) + AMP + diphosphate + H(+). Its pathway is aminoacyl-tRNA biosynthesis; selenocysteinyl-tRNA(Sec) biosynthesis; L-seryl-tRNA(Sec) from L-serine and tRNA(Sec): step 1/1. Catalyzes the attachment of serine to tRNA(Ser). Is also able to aminoacylate tRNA(Sec) with serine, to form the misacylated tRNA L-seryl-tRNA(Sec), which will be further converted into selenocysteinyl-tRNA(Sec). This is Serine--tRNA ligase from Mycoplasma pneumoniae (strain ATCC 29342 / M129 / Subtype 1) (Mycoplasmoides pneumoniae).